A 310-amino-acid polypeptide reads, in one-letter code: Lipoyl synthase (310 aa).

[4Fe-4S] cluster-binding residues include cysteine 51, cysteine 56, cysteine 62, cysteine 77, cysteine 81, cysteine 84, and serine 290. Residues 63 to 280 form the Radical SAM core domain; that stretch reads WSRKTATYLA…RRVGESLGLF (218 aa).

It belongs to the radical SAM superfamily. Lipoyl synthase family. Requires [4Fe-4S] cluster as cofactor.

Its subcellular location is the cytoplasm. It catalyses the reaction [[Fe-S] cluster scaffold protein carrying a second [4Fe-4S](2+) cluster] + N(6)-octanoyl-L-lysyl-[protein] + 2 oxidized [2Fe-2S]-[ferredoxin] + 2 S-adenosyl-L-methionine + 4 H(+) = [[Fe-S] cluster scaffold protein] + N(6)-[(R)-dihydrolipoyl]-L-lysyl-[protein] + 4 Fe(3+) + 2 hydrogen sulfide + 2 5'-deoxyadenosine + 2 L-methionine + 2 reduced [2Fe-2S]-[ferredoxin]. The protein operates within protein modification; protein lipoylation via endogenous pathway; protein N(6)-(lipoyl)lysine from octanoyl-[acyl-carrier-protein]: step 2/2. Its function is as follows. Catalyzes the radical-mediated insertion of two sulfur atoms into the C-6 and C-8 positions of the octanoyl moiety bound to the lipoyl domains of lipoate-dependent enzymes, thereby converting the octanoylated domains into lipoylated derivatives. This chain is Lipoyl synthase, found in Chlamydia abortus (strain DSM 27085 / S26/3) (Chlamydophila abortus).